Consider the following 363-residue polypeptide: Pyrimidine monooxygenase RutA (363 aa).

FMN contacts are provided by residues 49 to 50, N115, E124, 140 to 141, and S190; these read IK and RY.

This sequence belongs to the NtaA/SnaA/DszA monooxygenase family. RutA subfamily.

The enzyme catalyses uracil + FMNH2 + NADH + O2 = (Z)-3-ureidoacrylate + FMN + NAD(+) + H2O + H(+). It carries out the reaction thymine + FMNH2 + NADH + O2 = (Z)-2-methylureidoacrylate + FMN + NAD(+) + H2O + H(+). Functionally, catalyzes the pyrimidine ring opening between N-3 and C-4 by an unusual flavin hydroperoxide-catalyzed mechanism, adding oxygen atoms in the process to yield ureidoacrylate peracid, that immediately reacts with FMN forming ureidoacrylate and FMN-N(5)-oxide. The FMN-N(5)-oxide reacts spontaneously with NADH to produce FMN. Requires the flavin reductase RutF to regenerate FMN in vivo. The chain is Pyrimidine monooxygenase RutA from Escherichia coli O6:K15:H31 (strain 536 / UPEC).